A 196-amino-acid polypeptide reads, in one-letter code: Mitochondrial inner membrane protein SHH3 (196 aa).

The transit peptide at 1 to 53 (MKATIQRVTSVFGVPRASVFVPRISTPFILHNYISNGRMDLFSKEFHNGRVSK) directs the protein to the mitochondrion. The Mitochondrial matrix segment spans residues 54–97 (SDLWSSNKEEELLVSQRKKRPISPHLTVYEPEMSWYLSSLHRIS). 2 residues coordinate a ubiquinone: Ser-91 and Arg-95. A helical transmembrane segment spans residues 98 to 118 (GVLLALGFYAFTITLGVTTIM). Residues 119-137 (GMDTTFQDLNKWYHEKMPK) are Mitochondrial intermembrane-facing. A helical transmembrane segment spans residues 138-160 (WSQWVAKGSAAYLFAFHFGNGIR). His-154 is a heme binding site. Residues 161-174 (HLIWDMGYELTNRG) lie on the Mitochondrial matrix side of the membrane. Residues 175-195 (VIKTGSIVLAGTLVLGTYLLA) traverse the membrane as a helical segment. A topological domain (mitochondrial intermembrane) is located at residue Gln-196.

It belongs to the cytochrome b560 family.

It is found in the mitochondrion inner membrane. Homolog of SDH3, but seems not to be a stoichiometric subunit of either the succinate dehydrogenase (SDH) complex or the mitochondrial inner membrane translocase TIM22 complex. The polypeptide is Mitochondrial inner membrane protein SHH3 (Saccharomyces cerevisiae (strain ATCC 204508 / S288c) (Baker's yeast)).